The sequence spans 329 residues: Ribonucleoside-diphosphate reductase subunit beta (329 aa).

The Fe cation site is built by D66, E97, and H101. Y105 is an active-site residue. Residues E164, E198, and H201 each coordinate Fe cation.

Belongs to the ribonucleoside diphosphate reductase small chain family. Tetramer of two alpha and two beta subunits. Requires Fe cation as cofactor.

It catalyses the reaction a 2'-deoxyribonucleoside 5'-diphosphate + [thioredoxin]-disulfide + H2O = a ribonucleoside 5'-diphosphate + [thioredoxin]-dithiol. Provides the precursors necessary for DNA synthesis. Catalyzes the biosynthesis of deoxyribonucleotides from the corresponding ribonucleotides. The chain is Ribonucleoside-diphosphate reductase subunit beta (bnrdF) from Bacillus pumilus (Bacillus mesentericus).